The primary structure comprises 290 residues: Pre-mRNA-splicing factor cwf20 (290 aa).

2 disordered regions span residues 1–61 (MSLV…KSSF) and 114–134 (PNNS…KKST). Over residues 114-128 (PNNSVSDLTSTGSSE) the composition is skewed to polar residues.

Belongs to the 40S cdc5-associated complex (or cwf complex), a spliceosome sub-complex reminiscent of a late-stage spliceosome composed of the U2, U5 and U6 snRNAs and at least brr2, cdc5, cwf2/prp3, cwf3/syf1, cwf4/syf3, cwf5/ecm2, spp42/cwf6, cwf7/spf27, cwf8, cwf9, cwf10, cwf11, cwf12, prp45/cwf13, cwf14, cwf15, cwf16, cwf17, cwf18, cwf19, cwf20, cwf21, cwf22, cwf23, cwf24, cwf25, cwf26, cyp7/cwf27, cwf28, cwf29/ist3, lea1, msl1, prp5/cwf1, prp10, prp12/sap130, prp17, prp22, sap61, sap62, sap114, sap145, slu7, smb1, smd1, smd3, smf1, smg1 and syf2.

The protein resides in the nucleus. In terms of biological role, involved in mRNA splicing where it associates with cdc5 and the other cwf proteins as part of the spliceosome. The sequence is that of Pre-mRNA-splicing factor cwf20 (cwf20) from Schizosaccharomyces pombe (strain 972 / ATCC 24843) (Fission yeast).